Consider the following 474-residue polypeptide: Bifunctional protein HldE (474 aa).

Residues 1–318 (MKLSMPRFDQ…RAIQREEGSE (318 aa)) are ribokinase. 194–197 (NLSE) is a binding site for ATP. The active site involves aspartate 263. Residues 343–474 (FTNGCFDILH…AIVEKIRGQG (132 aa)) form a cytidylyltransferase region.

This sequence in the N-terminal section; belongs to the carbohydrate kinase PfkB family. The protein in the C-terminal section; belongs to the cytidylyltransferase family. Homodimer.

It catalyses the reaction D-glycero-beta-D-manno-heptose 7-phosphate + ATP = D-glycero-beta-D-manno-heptose 1,7-bisphosphate + ADP + H(+). The catalysed reaction is D-glycero-beta-D-manno-heptose 1-phosphate + ATP + H(+) = ADP-D-glycero-beta-D-manno-heptose + diphosphate. Its pathway is nucleotide-sugar biosynthesis; ADP-L-glycero-beta-D-manno-heptose biosynthesis; ADP-L-glycero-beta-D-manno-heptose from D-glycero-beta-D-manno-heptose 7-phosphate: step 1/4. It functions in the pathway nucleotide-sugar biosynthesis; ADP-L-glycero-beta-D-manno-heptose biosynthesis; ADP-L-glycero-beta-D-manno-heptose from D-glycero-beta-D-manno-heptose 7-phosphate: step 3/4. Its function is as follows. Catalyzes the phosphorylation of D-glycero-D-manno-heptose 7-phosphate at the C-1 position to selectively form D-glycero-beta-D-manno-heptose-1,7-bisphosphate. Functionally, catalyzes the ADP transfer from ATP to D-glycero-beta-D-manno-heptose 1-phosphate, yielding ADP-D-glycero-beta-D-manno-heptose. In Pseudomonas syringae pv. tomato (strain ATCC BAA-871 / DC3000), this protein is Bifunctional protein HldE.